Reading from the N-terminus, the 355-residue chain is WAT1-related protein At3g28130 (355 aa).

Transmembrane regions (helical) follow at residues Ala-11–Phe-31, Tyr-42–Phe-62, Ile-80–Tyr-100, Thr-104–Phe-124, Ser-136–Tyr-156, Trp-186–Leu-206, Phe-218–Val-238, Pro-244–Phe-264, Leu-290–Gly-310, and Ser-311–Lys-331. The EamA domain occupies Thr-29–Val-154.

This sequence belongs to the drug/metabolite transporter (DMT) superfamily. Plant drug/metabolite exporter (P-DME) (TC 2.A.7.4) family.

It localises to the membrane. This is WAT1-related protein At3g28130 from Arabidopsis thaliana (Mouse-ear cress).